Consider the following 356-residue polypeptide: MVPPTAVAEGSAVAIKDPVKDTILTPRFYTTDFEAMAAMDLQPNEAELEAICEEFRKDYNRHHFVRNEEFEGAADKLDPETRKVFIEFLEQSCTSEFSGFLLYKELSRRIKAKNPLLAECFAHMARDEARHAGFLNKSMSDFGMQLDLGFLTANKDYTFFKPKFIFYATYLSEKIGYWRYIAIYRHLEKNPDSKIFPIFNFFENWCQDENRHGDFFDALMKAQPDTVRGPIAKLWCRFFLLAVFATMYVRDVARKEFYEALGLDARTYDKMVIEKTNETSARVFPVVLDVNNDKFWTRLERLVANNAALDKADASDAIAPVKLLRKLPFWIGNGAEMAKLFLMPAIDSDRFQPAVR.

This sequence belongs to the AcsF family. The cofactor is Fe cation.

It carries out the reaction Mg-protoporphyrin IX 13-monomethyl ester + 3 NADPH + 3 O2 + 2 H(+) = 3,8-divinyl protochlorophyllide a + 3 NADP(+) + 5 H2O. The protein operates within porphyrin-containing compound metabolism; chlorophyll biosynthesis (light-independent). Catalyzes the formation of the isocyclic ring in chlorophyll biosynthesis. Mediates the cyclase reaction, which results in the formation of divinylprotochlorophyllide (Pchlide) characteristic of all chlorophylls from magnesium-protoporphyrin IX 13-monomethyl ester (MgPMME). In Synechococcus sp. (strain CC9605), this protein is Magnesium-protoporphyrin IX monomethyl ester [oxidative] cyclase.